Reading from the N-terminus, the 71-residue chain is Conotoxin PnMEKL-032 (71 aa).

A signal peptide spans 1-19 (MQKLIILLLVAAVLMSTQA). The propeptide occupies 20-46 (LFQEKRLKEKINFLSKEKADAEKQQKR). 3 disulfides stabilise this stretch: Cys-48–Cys-62, Cys-55–Cys-66, and Cys-61–Cys-70.

This sequence belongs to the conotoxin O2 superfamily. In terms of tissue distribution, expressed by the venom duct.

It is found in the secreted. The sequence is that of Conotoxin PnMEKL-032 from Conus pennaceus (Feathered cone).